Here is a 397-residue protein sequence, read N- to C-terminus: Subtilisin-like serine protease Pen c 1 (397 aa).

The signal sequence occupies residues Met-1–Ala-19. Residues Gly-20 to Thr-115 constitute a propeptide, removed in mature form. In terms of domain architecture, Inhibitor I9 spans Ser-35 to Asn-113. Positions Ser-125–Val-397 constitute a Peptidase S8 domain. Residues Asp-157, His-188, and Ser-343 each act as charge relay system in the active site.

This sequence belongs to the peptidase S8 family.

It localises to the secreted. With respect to regulation, inhibited by 0.1 mM diisopropyl fluorophosphate (DFP), phenylmethanesulfonyl fluoride (PMSF), chymostatin and elastatinal. Not inhibited by N-alpha-p-tosyl-L-lysine chloromethylketone (TLCK), N-tosyl-L-phenylalanyl chloromethyl ketone (TPCK) or N-carbobenzoxy-L-phenylalanine chloromethylketone (ZPCK). Functionally, serine protease. Hydrolyzes azocasein. Cleaves peptide bonds of the oxidized insulin B chain preferably at 15-Leu-|-Tyr-16, but also at 4-Gln-|-His-5 and 24-Phe-|-Phe-25, and to a lesser extent at 5-His-|-Leu-6 and 25-Phe-|-Tyr-26. Hydrolyzes amide bonds between amino acids and 7-amino-4-methylcoumarin (AMC) in vitro. This chain is Subtilisin-like serine protease Pen c 1, found in Penicillium citrinum.